The primary structure comprises 77 residues: Apelin (77 aa).

Residues 1 to 22 form the signal peptide; the sequence is MNLSFCVQALLLLWLSLTAVCG. A propeptide spanning residues 23–41 is cleaved from the precursor; it reads VPLMLPPDGKGLEEGNMRY. A disordered region spans residues 45–77; sequence PRTSRTGPGAWQGGRRKFRRQRPRLSHKGPMPF. Positions 58–71 are enriched in basic residues; that stretch reads GRRKFRRQRPRLSH.

It belongs to the apelin family. Post-translationally, several active peptides may be produced by proteolytic processing of the peptide precursor. As to expression, expressed in the lung, testis, ovary, uterus and mammary gland. Expressed in neurons in the thalamic paraventricular and hypothalamic supraoptic nuclei. The lung, testis and uterus mainly contain a large form that looks like apelin-36, whereas the mammary gland seems to contain 2 forms of apelin, a large form close to apelin-36 and a small form close to apelin-13 (at protein level). Widely expressed in the adult, with highest levels in the mammary gland of lactating animals, very high levels in the lung, intermediate levels in the spinal cord, ovary, adipose tissue, brain (neuronal cell bodies and fibers in the supraoptic and the paraventricular nuclei), heart and testis, and lowest levels in the pituitary gland, kidney, stomach, uterus and pancreas.

The protein resides in the secreted. The protein localises to the extracellular space. Peptide hormone that functions as endogenous ligand for the G-protein-coupled apelin receptor (APLNR/APJ), that plays a role in cadiovascular homeostasis. Functions as a balanced agonist activating both G(i) protein pathway and beta-arrestin pathway of APLNR. Downstream G proteins activation, apelin can inhibit cAMP production and activate key intracellular effectors such as ERKs. On the other hand, APLNR activation induces beta-arrestin recruitment to the membrane leading to desensitization and internalization of the receptor. Apelin blunts cardiac hypertrophic induction from APLNR on response to pathological stimuli, but also induces myocardial hypertrophy under normal conditions. Apelin-36 dissociates more hardly than (pyroglu)apelin-13 from APLNR. Involved in the regulation of cardiac precursor cell movements during gastrulation and heart morphogenesis. Has an inhibitory effect on cytokine production in response to T-cell receptor/CD3 cross-linking; the oral intake of apelin in the colostrum and the milk might therefore modulate immune responses in neonates. Plays a role in early coronary blood vessels formation. Mediates myocardial contractility in an ERK1/2-dependent manner. May also have a role in the central control of body fluid homeostasis by influencing vasopressin release and drinking behavior. This is Apelin from Rattus norvegicus (Rat).